The following is a 150-amino-acid chain: Large ribosomal subunit protein bL9 (150 aa).

The protein belongs to the bacterial ribosomal protein bL9 family.

Binds to the 23S rRNA. In Corynebacterium glutamicum (strain R), this protein is Large ribosomal subunit protein bL9.